The chain runs to 339 residues: DNA-directed RNA polymerase subunit alpha (339 aa).

Residues 1–233 form an alpha N-terminal domain (alpha-NTD) region; sequence MVREEVAGST…DLFLPFLHAE (233 aa). The tract at residues 264 to 339 is alpha C-terminal domain (alpha-CTD); sequence KKGIPLNSIF…IDLLKNKLSF (76 aa).

It belongs to the RNA polymerase alpha chain family. As to quaternary structure, in plastids the minimal PEP RNA polymerase catalytic core is composed of four subunits: alpha, beta, beta', and beta''. When a (nuclear-encoded) sigma factor is associated with the core the holoenzyme is formed, which can initiate transcription.

The protein resides in the plastid. It localises to the chloroplast. The enzyme catalyses RNA(n) + a ribonucleoside 5'-triphosphate = RNA(n+1) + diphosphate. Functionally, DNA-dependent RNA polymerase catalyzes the transcription of DNA into RNA using the four ribonucleoside triphosphates as substrates. This chain is DNA-directed RNA polymerase subunit alpha, found in Aegilops tauschii (Tausch's goatgrass).